We begin with the raw amino-acid sequence, 82 residues long: ATP synthase subunit c, chloroplastic (82 aa).

Helical transmembrane passes span 4 to 24 (IISA…AIGP) and 57 to 77 (LAFM…LLFA).

This sequence belongs to the ATPase C chain family. In terms of assembly, F-type ATPases have 2 components, F(1) - the catalytic core - and F(0) - the membrane proton channel. F(1) has five subunits: alpha(3), beta(3), gamma(1), delta(1), epsilon(1). F(0) has four main subunits: a(1), b(1), b'(1) and c(10-14). The alpha and beta chains form an alternating ring which encloses part of the gamma chain. F(1) is attached to F(0) by a central stalk formed by the gamma and epsilon chains, while a peripheral stalk is formed by the delta, b and b' chains.

The protein resides in the plastid. It localises to the chloroplast thylakoid membrane. F(1)F(0) ATP synthase produces ATP from ADP in the presence of a proton or sodium gradient. F-type ATPases consist of two structural domains, F(1) containing the extramembraneous catalytic core and F(0) containing the membrane proton channel, linked together by a central stalk and a peripheral stalk. During catalysis, ATP synthesis in the catalytic domain of F(1) is coupled via a rotary mechanism of the central stalk subunits to proton translocation. Its function is as follows. Key component of the F(0) channel; it plays a direct role in translocation across the membrane. A homomeric c-ring of between 10-14 subunits forms the central stalk rotor element with the F(1) delta and epsilon subunits. This is ATP synthase subunit c, chloroplastic from Heterosigma akashiwo (strain NIES-293 / 8280G21-1).